The following is a 309-amino-acid chain: tRNA uridine(34) hydroxylase (309 aa).

In terms of domain architecture, Rhodanese spans Ser-130–Ser-224. The active-site Cysteine persulfide intermediate is the Cys-184.

It belongs to the TrhO family.

The catalysed reaction is uridine(34) in tRNA + AH2 + O2 = 5-hydroxyuridine(34) in tRNA + A + H2O. Functionally, catalyzes oxygen-dependent 5-hydroxyuridine (ho5U) modification at position 34 in tRNAs. The protein is tRNA uridine(34) hydroxylase of Rhizobium johnstonii (strain DSM 114642 / LMG 32736 / 3841) (Rhizobium leguminosarum bv. viciae).